The chain runs to 498 residues: Neoxanthin synthase, chloroplastic (498 aa).

The transit peptide at 1-42 (METLLKPFPSLLLSSPTPYRSIVQQNPSFLSPTTKKKSRKCL) directs the protein to the chloroplast.

This sequence belongs to the lycopene cyclase family. Expressed exclusively in chromoplast-containing tissues of flowers and fruits. Expressed in preanthesis flowers.

It is found in the plastid. The protein resides in the chloroplast. The enzyme catalyses all-trans-violaxanthin = all-trans-neoxanthin. It carries out the reaction a carotenoid psi-end group = a carotenoid beta-end derivative. Its pathway is carotenoid biosynthesis; neoxanthin biosynthesis. It functions in the pathway carotenoid biosynthesis; beta-carotene biosynthesis. Involved in the synthesis of neoxanthin, the last product of carotenoid synthesis and a precursor of abscisic acid. Involved in the beta-carotene biosynthesis. In Solanum lycopersicum (Tomato), this protein is Neoxanthin synthase, chloroplastic.